The chain runs to 310 residues: Olfactory receptor 5P80 (310 aa).

Over 1 to 25 (MEPGNYTVVTEVILLGFTEDAIIRA) the chain is Extracellular. An N-linked (GlcNAc...) asparagine glycan is attached at Asn5. A helical transmembrane segment spans residues 26–46 (ILFIVFLIIYSVTLMGNASII). At 47–54 (MLIRRSPQ) the chain is on the cytoplasmic side. The chain crosses the membrane as a helical span at residues 55–75 (LHTPMYLLLSHLAFVDIGYSS). Residues 76 to 99 (SVTPIMLKGFLRKETFILVSGCVA) lie on the Extracellular side of the membrane. A disulfide bridge connects residues Cys97 and Cys189. Residues 100–120 (QLCSVVTFGSTECFLLAAMAY) traverse the membrane as a helical segment. The Cytoplasmic portion of the chain corresponds to 121–133 (DRYVAICSPLLYA). Residues 134–154 (TQMSSTVCILLVGASYLGGCV) form a helical membrane-spanning segment. Residues 155–196 (NAWTFTGCLLNLSFCRPNKVNHFFCDYSPLLKISCSHDFSSE) lie on the Extracellular side of the membrane. Asn165 carries N-linked (GlcNAc...) asparagine glycosylation. The helical transmembrane segment at 197-217 (VIPAISSGSIIVVTVFIIALS) threads the bilayer. The Cytoplasmic segment spans residues 218 to 237 (YVYILVSILKMRSTEGRQKA). A helical transmembrane segment spans residues 238-258 (FSTCTSHLTAVTLFYGTITFI). Residues 259 to 271 (YVMPKSSYSTDQN) lie on the Extracellular side of the membrane. Residues 272–292 (KVVSVFYTVVIPMLNPIIYSL) traverse the membrane as a helical segment. Over 293-310 (RNKDVKEAMKKLMANTHH) the chain is Cytoplasmic.

The protein belongs to the G-protein coupled receptor 1 family.

It is found in the cell membrane. Its function is as follows. Potential odorant receptor. The chain is Olfactory receptor 5P80 from Mus musculus (Mouse).